Consider the following 398-residue polypeptide: Phosphoglycerate kinase (398 aa).

Residues 21–23, Arg-36, 59–62, Arg-119, and Arg-157 each bind substrate; these read DFN and HLGR. ATP is bound by residues Lys-208, Gly-296, Glu-327, and 354–357; that span reads GGDS.

The protein belongs to the phosphoglycerate kinase family. As to quaternary structure, monomer.

It localises to the cytoplasm. The enzyme catalyses (2R)-3-phosphoglycerate + ATP = (2R)-3-phospho-glyceroyl phosphate + ADP. It functions in the pathway carbohydrate degradation; glycolysis; pyruvate from D-glyceraldehyde 3-phosphate: step 2/5. The polypeptide is Phosphoglycerate kinase (Streptococcus mutans serotype c (strain ATCC 700610 / UA159)).